Reading from the N-terminus, the 381-residue chain is Succinyl-diaminopimelate desuccinylase (381 aa).

His68 is a binding site for Zn(2+). Asp70 is a catalytic residue. Asp101 provides a ligand contact to Zn(2+). Glu135 functions as the Proton acceptor in the catalytic mechanism. The Zn(2+) site is built by Glu136, Glu164, and His350.

The protein belongs to the peptidase M20A family. DapE subfamily. Homodimer. The cofactor is Zn(2+). Co(2+) serves as cofactor.

It catalyses the reaction N-succinyl-(2S,6S)-2,6-diaminopimelate + H2O = (2S,6S)-2,6-diaminopimelate + succinate. Its pathway is amino-acid biosynthesis; L-lysine biosynthesis via DAP pathway; LL-2,6-diaminopimelate from (S)-tetrahydrodipicolinate (succinylase route): step 3/3. In terms of biological role, catalyzes the hydrolysis of N-succinyl-L,L-diaminopimelic acid (SDAP), forming succinate and LL-2,6-diaminopimelate (DAP), an intermediate involved in the bacterial biosynthesis of lysine and meso-diaminopimelic acid, an essential component of bacterial cell walls. The polypeptide is Succinyl-diaminopimelate desuccinylase (Neisseria meningitidis serogroup C (strain 053442)).